Reading from the N-terminus, the 103-residue chain is NADH-quinone oxidoreductase subunit K (103 aa).

A run of 3 helical transmembrane segments spans residues V5–V25, I32–F52, and F66–I86.

This sequence belongs to the complex I subunit 4L family. NDH-1 is composed of 15 different subunits. Subunits NuoA, H, J, K, L, M, N constitute the membrane sector of the complex.

It is found in the cell membrane. The enzyme catalyses a quinone + NADH + 5 H(+)(in) = a quinol + NAD(+) + 4 H(+)(out). In terms of biological role, NDH-1 shuttles electrons from NADH, via FMN and iron-sulfur (Fe-S) centers, to quinones in the respiratory chain. The immediate electron acceptor for the enzyme in this species is believed to be a menaquinone. Couples the redox reaction to proton translocation (for every two electrons transferred, four hydrogen ions are translocated across the cytoplasmic membrane), and thus conserves the redox energy in a proton gradient. This Deinococcus radiodurans (strain ATCC 13939 / DSM 20539 / JCM 16871 / CCUG 27074 / LMG 4051 / NBRC 15346 / NCIMB 9279 / VKM B-1422 / R1) protein is NADH-quinone oxidoreductase subunit K.